We begin with the raw amino-acid sequence, 123 residues long: MPTINQLVRKGRKKAEKKQSTPALKGGPQKRGVCTRVYTSTPKKPNSALRKVARVRLTTGMEVAAYIPGMGHNLQEHSVVLVRGGRVKDLPGVRYHIVRGTLDTLGVEDRKQGRSKYGAKRPK.

Residues 1–47 are disordered; that stretch reads MPTINQLVRKGRKKAEKKQSTPALKGGPQKRGVCTRVYTSTPKKPNS. Residue Asp-89 is modified to 3-methylthioaspartic acid.

This sequence belongs to the universal ribosomal protein uS12 family. In terms of assembly, part of the 30S ribosomal subunit. Contacts proteins S8 and S17. May interact with IF1 in the 30S initiation complex.

Functionally, with S4 and S5 plays an important role in translational accuracy. Its function is as follows. Interacts with and stabilizes bases of the 16S rRNA that are involved in tRNA selection in the A site and with the mRNA backbone. Located at the interface of the 30S and 50S subunits, it traverses the body of the 30S subunit contacting proteins on the other side and probably holding the rRNA structure together. The combined cluster of proteins S8, S12 and S17 appears to hold together the shoulder and platform of the 30S subunit. This Desulforapulum autotrophicum (strain ATCC 43914 / DSM 3382 / VKM B-1955 / HRM2) (Desulfobacterium autotrophicum) protein is Small ribosomal subunit protein uS12.